The primary structure comprises 842 residues: Translation initiation factor IF-2 (842 aa).

Disordered regions lie at residues 42–91 (ETKR…NLSS) and 139–253 (LQKQ…NQEP). Basic and acidic residues-rich tracts occupy residues 176-190 (IEKR…EERH) and 199-214 (SEIR…DERR). The 170-residue stretch at 340–509 (PRPPVVTIMG…LLQAEMLDLK (170 aa)) folds into the tr-type G domain. The interval 349–356 (GHVDHGKT) is G1. 349–356 (GHVDHGKT) provides a ligand contact to GTP. Residues 374–378 (GITQH) form a G2 region. Residues 395–398 (DTPG) form a G3 region. GTP contacts are provided by residues 395–399 (DTPGH) and 449–452 (NKID). Residues 449–452 (NKID) form a G4 region. A G5 region spans residues 485 to 487 (SAK).

The protein belongs to the TRAFAC class translation factor GTPase superfamily. Classic translation factor GTPase family. IF-2 subfamily.

It localises to the cytoplasm. Functionally, one of the essential components for the initiation of protein synthesis. Protects formylmethionyl-tRNA from spontaneous hydrolysis and promotes its binding to the 30S ribosomal subunits. Also involved in the hydrolysis of GTP during the formation of the 70S ribosomal complex. The chain is Translation initiation factor IF-2 from Bartonella tribocorum (strain CIP 105476 / IBS 506).